Reading from the N-terminus, the 254-residue chain is MAQLTQMTNEQLRELIEAVRAAAVGAAGSAAAAGGADASRGKGNFSACTHSFGGTRDHDVVEEFIGNIETYKDVEGISDENALKGISLLFYGMASTWWQGVRKEATTWKEAIALIREHFSPTKPAYQIYMEFFQNKQDDHDPIDTFVIQKRALLAQLPSGRHDEETELDLLFGLLNIKYRKHISRHSVHTFKDLLEQGRIIEHNNQEDEEQLATAKNTRGSKRTTRCTYCSFRGHTFDNCRKRQKDRQEEQHEE.

This sequence belongs to the ARC/ARG3.1 family. In terms of assembly, homooligomer; homooligomerizes into virion-like capsids. As to expression, expressed in a specific population of brain neurons, named E347, that are necessary and sufficient for proper body fat storage.

It is found in the extracellular vesicle membrane. The protein resides in the synapse. Master regulator of synaptic plasticity that self-assembles into virion-like capsids that encapsulate RNAs and mediate intercellular RNA transfer from motorneurons to muscles. Arc1 protein is released from motorneurons in extracellular vesicles that mediate the transfer of Arc1 mRNA into muscle cells, where Arc1 mRNA can undergo activity-dependent translation. Intercellular transfer od Arc1 mRNA is required for synaptic plasticity at the neuromuscular junction. May play a role in energy balance: required for regulation of body fat by a specific population of brain neurons, named E347, that are necessary and sufficient for proper body fat storage. The protein is Activity-regulated cytoskeleton associated protein 1 of Drosophila melanogaster (Fruit fly).